The sequence spans 384 residues: tRNA-specific 2-thiouridylase MnmA (384 aa).

The tract at residues 1–26 is disordered; sequence MDEGIRASGGIRACQTGKQKQGRKRP. ATP is bound by residues 36–43 and Met-62; that span reads GMSGGVDS. Residues 122–124 form an interaction with target base in tRNA region; that stretch reads NPD. Residue Cys-127 is the Nucleophile of the active site. An intrachain disulfide couples Cys-127 to Cys-223. Residue Gly-151 coordinates ATP. Positions 173–175 are interaction with tRNA; sequence KDQ. Residue Cys-223 is the Cysteine persulfide intermediate of the active site. Residues 334-335 form an interaction with tRNA region; that stretch reads RY.

The protein belongs to the MnmA/TRMU family.

Its subcellular location is the cytoplasm. It catalyses the reaction S-sulfanyl-L-cysteinyl-[protein] + uridine(34) in tRNA + AH2 + ATP = 2-thiouridine(34) in tRNA + L-cysteinyl-[protein] + A + AMP + diphosphate + H(+). Functionally, catalyzes the 2-thiolation of uridine at the wobble position (U34) of tRNA, leading to the formation of s(2)U34. This is tRNA-specific 2-thiouridylase MnmA from Chromobacterium violaceum (strain ATCC 12472 / DSM 30191 / JCM 1249 / CCUG 213 / NBRC 12614 / NCIMB 9131 / NCTC 9757 / MK).